We begin with the raw amino-acid sequence, 290 residues long: Ribonuclease HIII (290 aa).

The region spanning Leu-78–Ala-290 is the RNase H type-2 domain. A divalent metal cation is bound by residues Asp-84, Glu-85, and Asp-187.

It belongs to the RNase HII family. RnhC subfamily. Mn(2+) serves as cofactor. The cofactor is Mg(2+).

Its subcellular location is the cytoplasm. It carries out the reaction Endonucleolytic cleavage to 5'-phosphomonoester.. Its function is as follows. Endonuclease that specifically degrades the RNA of RNA-DNA hybrids. The protein is Ribonuclease HIII of Streptococcus pneumoniae serotype 2 (strain D39 / NCTC 7466).